The chain runs to 440 residues: MTTRQPLYKSLYVQVLVAITIGILLGHYYPETGVALKPLGDGFVKLIKMVIAPIIFCTVVSGIAGMQSMKSVGKTGGYALLYFEIVSTIALIIGLVVVNVVKPGAGMHIDVSTLNASSVAAYAAAGAQQTTVGFLLNVIPNTVVGAFANGDILQVLMFSVLFGFALHRLGSYGKPVLDMIDRFAHVMFNIINMIMKLAPIGAFGAMAFTIGQYGVGSLVQLGYLMACFYITCLLFVLVVLGGICRAHGFSVIKLIRYIREELLIVLGTSSSESALPRMLAKMERLGAKKSVVGLVIPTGYSFNLDGTSIYLTMAAVFIAQATDTTMDITHQITLLLVLLVASKGAAGVTGSGFIVLAATLSAVGHLPVAGLALILGIDRFMSEARALTNLVGNAVATVVVAKWVKEMDNDKLASELDSGGAPLIDTRPTDDLGVAEGPAR.

Helical transmembrane passes span 7 to 29 (LYKSLYVQVLVAITIGILLGHYY), 49 to 66 (MVIAPIIFCTVVSGIAGM), 79 to 101 (ALLYFEIVSTIALIIGLVVVNVV), 143 to 165 (VVGAFANGDILQVLMFSVLFGFA), 186 to 208 (VMFNIINMIMKLAPIGAFGAMAF), 221 to 243 (LGYLMACFYITCLLFVLVVLGGI), 291 to 313 (VVGLVIPTGYSFNLDGTSIYLTM), 328 to 350 (ITHQITLLLVLLVASKGAAGVTG), and 355 to 377 (VLAATLSAVGHLPVAGLALILGI). The segment at 419–440 (GGAPLIDTRPTDDLGVAEGPAR) is disordered.

It belongs to the dicarboxylate/amino acid:cation symporter (DAACS) (TC 2.A.23) family.

The protein resides in the cell inner membrane. Responsible for the transport of dicarboxylates such as succinate, fumarate, and malate from the periplasm across the membrane. This is C4-dicarboxylate transport protein from Pseudomonas putida (strain ATCC 47054 / DSM 6125 / CFBP 8728 / NCIMB 11950 / KT2440).